The chain runs to 647 residues: MLWCPSVLVPLIAVAACLPVLAIGTPLEWEFAITLKSKILFVDEFWRTLASAAHEFDELSALTFDETEELIYFNDQQHRNGSIFSLRRDALMASHIAEQAIQRTGNESVGGLAYDPLNRNLFWSDTLQKKIFFASIDSKVTETPKVLVDLSQEGARPDGVAVDVCRRKLYWTNSNITHPTVESIDLAGTNRQVIIDTDIDMPRGIVVDQLSDRIFWIDDLKGVFFALKSARLDGSDRQLVLHDKHHEPLNLAVTNDAIYWTDKTTKAVWSHPKVPIVKATTTTSPLKAEEEDATETIPDIEPEPVAEVSALLRVANLSEEARGIVARTGFYQRLQKDEHCANIVRKVKERLDLMTKKKQMRSLVDEKTAQLERDHCLNGGTYIADRVLCICPTGFKGSRCEIRECHNFCVHGTCEISDRAYPKCYCQPGFSGERCEISKCSGLCLNGGHCKLEDISEKPSCECPHNFAGERCEQNSTEICALFCRLLKHEADIYVPFGCHDICEELAKDASDKIAIPQYHHLEVCMTPSPWTSNVIIVLVLGIVSCFFLVAVIVHGFRRLYKPKRPRIRKTFVVRKQARTNSSGDTPLTNRPLATEQCEITIENCCNMNICETPCFDPKLVEQTLAKSSNCKEDKKILIHNMDDDLY.

Positions methionine 1 to alanine 22 are cleaved as a signal peptide. At isoleucine 23 to asparagine 534 the chain is on the extracellular side. 2 N-linked (GlcNAc...) asparagine glycosylation sites follow: asparagine 80 and asparagine 106. LDL-receptor class B repeat units lie at residues arginine 119–arginine 166, arginine 167–serine 211, and aspartate 212–alanine 257. N-linked (GlcNAc...) asparagine glycosylation is present at asparagine 175. Asparagine 316 is a glycosylation site (N-linked (GlcNAc...) asparagine). EGF-like domains lie at aspartate 365 to glutamate 401 and glutamate 436 to glutamate 473. 5 disulfides stabilise this stretch: cysteine 376–cysteine 389, cysteine 391–cysteine 400, cysteine 440–cysteine 450, cysteine 444–cysteine 461, and cysteine 463–cysteine 472. A glycan (N-linked (GlcNAc...) asparagine) is linked at asparagine 475. Residues valine 535 to histidine 555 form a helical membrane-spanning segment. Topologically, residues glycine 556–tyrosine 647 are cytoplasmic.

It belongs to the cueball family.

The protein resides in the cell membrane. Has a role in spermatogenesis and oogenesis. This Drosophila pseudoobscura pseudoobscura (Fruit fly) protein is Protein cueball.